Reading from the N-terminus, the 927-residue chain is DNA polymerase alpha-binding protein (927 aa).

WD repeat units lie at residues 10 to 49, 134 to 173, 227 to 266, and 273 to 313; these read FDFG…EEPE, KIDE…PNKV, AANR…LQKT, and STKA…IHYT. Ser-377, Ser-379, and Ser-398 each carry phosphoserine. Residues Thr-401 and Thr-411 each carry the phosphothreonine modification. The residue at position 463 (Ser-463) is a Phosphoserine. A WD 5 repeat occupies 699–739; that stretch reads GSDNTLLLLSKWRSPEESKWLPILDSNMEIWKMSGGKETTD.

The protein localises to the nucleus. Functionally, accessory factor for DNA replication. It plays a role in accurately duplicating the genome in vivo. The protein is DNA polymerase alpha-binding protein (CTF4) of Saccharomyces cerevisiae (strain ATCC 204508 / S288c) (Baker's yeast).